The following is a 104-amino-acid chain: Pyrimidine/purine nucleoside phosphorylase (104 aa).

This sequence belongs to the nucleoside phosphorylase PpnP family.

The enzyme catalyses a purine D-ribonucleoside + phosphate = a purine nucleobase + alpha-D-ribose 1-phosphate. It carries out the reaction adenosine + phosphate = alpha-D-ribose 1-phosphate + adenine. It catalyses the reaction cytidine + phosphate = cytosine + alpha-D-ribose 1-phosphate. The catalysed reaction is guanosine + phosphate = alpha-D-ribose 1-phosphate + guanine. The enzyme catalyses inosine + phosphate = alpha-D-ribose 1-phosphate + hypoxanthine. It carries out the reaction thymidine + phosphate = 2-deoxy-alpha-D-ribose 1-phosphate + thymine. It catalyses the reaction uridine + phosphate = alpha-D-ribose 1-phosphate + uracil. The catalysed reaction is xanthosine + phosphate = alpha-D-ribose 1-phosphate + xanthine. Its function is as follows. Catalyzes the phosphorolysis of diverse nucleosides, yielding D-ribose 1-phosphate and the respective free bases. Can use uridine, adenosine, guanosine, cytidine, thymidine, inosine and xanthosine as substrates. Also catalyzes the reverse reactions. This is Pyrimidine/purine nucleoside phosphorylase from Colwellia psychrerythraea (strain 34H / ATCC BAA-681) (Vibrio psychroerythus).